The following is a 298-amino-acid chain: Small ribosomal subunit biogenesis GTPase RsgA (298 aa).

The region spanning 67-228 is the CP-type G domain; that stretch reads TNELVRPPIS…IADTPGFSSL (162 aa). GTP is bound by residues 116–119 and 171–179; these read TKMD and GQSGVGKSS. Residues cysteine 252, cysteine 257, histidine 259, and cysteine 265 each contribute to the Zn(2+) site.

The protein belongs to the TRAFAC class YlqF/YawG GTPase family. RsgA subfamily. In terms of assembly, monomer. Associates with 30S ribosomal subunit, binds 16S rRNA. Zn(2+) is required as a cofactor.

Its subcellular location is the cytoplasm. Its function is as follows. One of several proteins that assist in the late maturation steps of the functional core of the 30S ribosomal subunit. Helps release RbfA from mature subunits. May play a role in the assembly of ribosomal proteins into the subunit. Circularly permuted GTPase that catalyzes slow GTP hydrolysis, GTPase activity is stimulated by the 30S ribosomal subunit. This is Small ribosomal subunit biogenesis GTPase RsgA from Bacillus pumilus (strain SAFR-032).